We begin with the raw amino-acid sequence, 270 residues long: Ribosomal RNA small subunit methyltransferase A (270 aa).

Residues Asn-15, Ile-17, Gly-42, Glu-64, Asp-89, and Asn-108 each coordinate S-adenosyl-L-methionine.

Belongs to the class I-like SAM-binding methyltransferase superfamily. rRNA adenine N(6)-methyltransferase family. RsmA subfamily.

It is found in the cytoplasm. It catalyses the reaction adenosine(1518)/adenosine(1519) in 16S rRNA + 4 S-adenosyl-L-methionine = N(6)-dimethyladenosine(1518)/N(6)-dimethyladenosine(1519) in 16S rRNA + 4 S-adenosyl-L-homocysteine + 4 H(+). In terms of biological role, specifically dimethylates two adjacent adenosines (A1518 and A1519) in the loop of a conserved hairpin near the 3'-end of 16S rRNA in the 30S particle. May play a critical role in biogenesis of 30S subunits. This chain is Ribosomal RNA small subunit methyltransferase A, found in Anaplasma marginale (strain Florida).